The primary structure comprises 579 residues: Arginine--tRNA ligase (579 aa).

The short motif at 123 to 133 (PNLAKEMHVGH) is the 'HIGH' region element.

It belongs to the class-I aminoacyl-tRNA synthetase family. In terms of assembly, monomer.

It is found in the cytoplasm. The enzyme catalyses tRNA(Arg) + L-arginine + ATP = L-arginyl-tRNA(Arg) + AMP + diphosphate. The chain is Arginine--tRNA ligase from Cellvibrio japonicus (strain Ueda107) (Pseudomonas fluorescens subsp. cellulosa).